A 363-amino-acid chain; its full sequence is Pulmonary surfactant-associated protein B (363 aa).

The N-terminal stretch at 1–16 (LLWLLLLPTLCGLGAA) is a signal peptide. A propeptide spanning residues 17–180 (DWSAPSLACA…PHTQDLSEQQ (164 aa)) is cleaved from the precursor. The Saposin A-type domain maps to 18 to 58 (WSAPSLACARGPAFWCQSLEQALQCRALGHCLQEVWGNARA). Saposin B-type domains follow at residues 58 to 140 (ADDL…KPGL), 184 to 261 (PLPY…SHED), and 277 to 352 (QESK…RTTF). Cystine bridges form between C62-C136, C65-C130, C93-C105, C188-C257, C191-C251, C215-C226, C281-C348, C284-C342, and C307-C317. A propeptide spanning residues 260–363 (EDSAGPALAS…PLQCIHIPHF (104 aa)) is cleaved from the precursor. N293 carries N-linked (GlcNAc...) asparagine glycosylation.

As to quaternary structure, homodimer; disulfide-linked.

The protein resides in the secreted. The protein localises to the extracellular space. It is found in the surface film. Pulmonary surfactant-associated proteins promote alveolar stability by lowering the surface tension at the air-liquid interface in the peripheral air spaces. SP-B increases the collapse pressure of palmitic acid to nearly 70 millinewtons per meter. This Canis lupus familiaris (Dog) protein is Pulmonary surfactant-associated protein B (SFTPB).